The sequence spans 585 residues: Efflux pump dotC (585 aa).

Positions 1-34 are enriched in basic and acidic residues; it reads MSEDHTKADNLSEKDPHSPERSDSSSHEDAHARE. Positions 1 to 45 are disordered; it reads MSEDHTKADNLSEKDPHSPERSDSSSHEDAHAREEEESSDDDGAL. N10 carries N-linked (GlcNAc...) asparagine glycosylation. Over residues 35-44 the composition is skewed to acidic residues; sequence EEESSDDDGA. A helical transmembrane segment spans residues 51–71; it reads SLIAIVMIALSLIGLQLAVFL. Residue N91 is glycosylated (N-linked (GlcNAc...) asparagine). The next 13 helical transmembrane spans lie at 94-114, 132-152, 158-178, 186-206, 214-234, 247-267, 280-300, 323-343, 353-373, 385-405, 414-434, 449-471, and 524-544; these read AAYT…TPIW, ALFM…MLIT, GAAG…LFSL, GMIG…GGAF, WCFY…FFFL, FAAI…MFLF, SATV…FGLV, ALLV…YLPL, PILA…SAAA, LIPM…LINF, LIIY…APLV, TATF…QVLY, and SPMW…ILLV. A disordered region spans residues 564 to 585; the sequence is KKAEAERKAERQAKDLEKAQKS.

The protein belongs to the major facilitator superfamily. TCR/Tet family.

The protein localises to the cell membrane. Its subcellular location is the vacuole membrane. Its function is as follows. Efflux pump; part of the gene cluster that mediates the biosynthesis of dothistromin (DOTH), a polyketide toxin very similar in structure to the aflatoxin precursor, versicolorin B. One function of dotC may be to transport early-stage dothistromin biosynthetic intermediates from the cytoplasm into vacuoles, thereby affecting the rate of dothistromin production. The polypeptide is Efflux pump dotC (Dothistroma septosporum (Red band needle blight fungus)).